Consider the following 225-residue polypeptide: Phosphatidylserine decarboxylase proenzyme (225 aa).

Residue serine 182 is the Schiff-base intermediate with substrate; via pyruvic acid of the active site. Serine 182 carries the pyruvic acid (Ser); by autocatalysis modification.

Belongs to the phosphatidylserine decarboxylase family. PSD-A subfamily. In terms of assembly, heterodimer of a large membrane-associated beta subunit and a small pyruvoyl-containing alpha subunit. Pyruvate serves as cofactor. Post-translationally, is synthesized initially as an inactive proenzyme. Formation of the active enzyme involves a self-maturation process in which the active site pyruvoyl group is generated from an internal serine residue via an autocatalytic post-translational modification. Two non-identical subunits are generated from the proenzyme in this reaction, and the pyruvate is formed at the N-terminus of the alpha chain, which is derived from the carboxyl end of the proenzyme. The post-translation cleavage follows an unusual pathway, termed non-hydrolytic serinolysis, in which the side chain hydroxyl group of the serine supplies its oxygen atom to form the C-terminus of the beta chain, while the remainder of the serine residue undergoes an oxidative deamination to produce ammonia and the pyruvoyl prosthetic group on the alpha chain.

It is found in the cell membrane. The enzyme catalyses a 1,2-diacyl-sn-glycero-3-phospho-L-serine + H(+) = a 1,2-diacyl-sn-glycero-3-phosphoethanolamine + CO2. It participates in phospholipid metabolism; phosphatidylethanolamine biosynthesis; phosphatidylethanolamine from CDP-diacylglycerol: step 2/2. Its function is as follows. Catalyzes the formation of phosphatidylethanolamine (PtdEtn) from phosphatidylserine (PtdSer). The polypeptide is Phosphatidylserine decarboxylase proenzyme (Neorickettsia sennetsu (strain ATCC VR-367 / Miyayama) (Ehrlichia sennetsu)).